A 312-amino-acid polypeptide reads, in one-letter code: Porphobilinogen deaminase (312 aa).

An S-(dipyrrolylmethanemethyl)cysteine modification is found at C241.

Belongs to the HMBS family. Monomer. Dipyrromethane is required as a cofactor.

It carries out the reaction 4 porphobilinogen + H2O = hydroxymethylbilane + 4 NH4(+). Its pathway is porphyrin-containing compound metabolism; protoporphyrin-IX biosynthesis; coproporphyrinogen-III from 5-aminolevulinate: step 2/4. In terms of biological role, tetrapolymerization of the monopyrrole PBG into the hydroxymethylbilane pre-uroporphyrinogen in several discrete steps. The sequence is that of Porphobilinogen deaminase from Cytophaga hutchinsonii (strain ATCC 33406 / DSM 1761 / CIP 103989 / NBRC 15051 / NCIMB 9469 / D465).